The primary structure comprises 72 residues: Translation initiation factor IF-1 (72 aa).

Positions Met-1–Arg-72 constitute an S1-like domain.

This sequence belongs to the IF-1 family. As to quaternary structure, component of the 30S ribosomal translation pre-initiation complex which assembles on the 30S ribosome in the order IF-2 and IF-3, IF-1 and N-formylmethionyl-tRNA(fMet); mRNA recruitment can occur at any time during PIC assembly.

It localises to the cytoplasm. One of the essential components for the initiation of protein synthesis. Stabilizes the binding of IF-2 and IF-3 on the 30S subunit to which N-formylmethionyl-tRNA(fMet) subsequently binds. Helps modulate mRNA selection, yielding the 30S pre-initiation complex (PIC). Upon addition of the 50S ribosomal subunit IF-1, IF-2 and IF-3 are released leaving the mature 70S translation initiation complex. The polypeptide is Translation initiation factor IF-1 (Pseudoalteromonas translucida (strain TAC 125)).